The primary structure comprises 349 residues: Mitomycin biosynthesis 6-O-methyltransferase (349 aa).

Residues Ser-167, Gly-190, Glu-213–Arg-214, Asp-240–Phe-241, and Lys-255 each bind S-adenosyl-L-methionine. Residue His-259 is the Proton acceptor of the active site. Asn-288 contributes to the substrate binding site.

The protein belongs to the class I-like SAM-binding methyltransferase superfamily. Cation-independent O-methyltransferase family. COMT subfamily. Homodimer.

The enzyme catalyses 6-demethylmitomycin A + S-adenosyl-L-methionine = mitomycin A + S-adenosyl-L-homocysteine. The catalysed reaction is 6-demethylmitomycin B + S-adenosyl-L-methionine = mitomycin B + S-adenosyl-L-homocysteine. Completely inhibited by Zn(2+) and Cu(2+). Functionally, involved in the biosynthesis of the quinone methoxy group present in the mitomycin A and B, which are used as anticancer agents. In vitro, catalyzes the 6-O-methylation of both C9-beta- and C9-alpha-configured 6-hydroxymitomycins via the transfer of the S-methyl group of S-adenosyl-L-methionine (AdoMet) to the 6-demethylmitomycin A and B. It can also use hydroxyquinone as substrate. The polypeptide is Mitomycin biosynthesis 6-O-methyltransferase (Streptomyces lavendulae).